Consider the following 495-residue polypeptide: Maternal protein exuperantia-1 (495 aa).

Disordered regions lie at residues 197–217 and 377–495; these read DESANKENEPENVNRNGSSND and TIKP…AATN. Composition is skewed to polar residues over residues 207–216 and 398–414; these read ENVNRNGSSN and AASSKNGAMSSRSTSTE.

In terms of biological role, ensures the proper localization of the mRNA of the bicoid gene to the anterior regions of the oocyte thus playing a fundamental role in the establishment of the polarity of the oocyte. May bind the bcd mRNA. The sequence is that of Maternal protein exuperantia-1 (exu1) from Drosophila pseudoobscura pseudoobscura (Fruit fly).